Here is a 289-residue protein sequence, read N- to C-terminus: MPARASRPAPGLPARAGLGFKPEHYATLVEQPPDLGFFEIHAENYMVPGGPAHAQLAWLRERYAISVHGVGLSLGGHDPLDARLLAGHRQLQRRYAPDSISEHLAWSRHDGRYFNDLLPIVYDDAALRRVCAHIDQFQQCLGQPILLENPATYVRFEASHIDEAQFLCELVARTGCGLLLDVNNVYVSAVNHGFDARAYLARLPLAAVGEIHLAGHARQRDAHGRAVLIDSHDAPVDEAVWDLYEYTLALTGPVATLLERDGNIPPLAALLAETGRVAACLARGLALAA.

It belongs to the UPF0276 family.

This Bordetella parapertussis (strain 12822 / ATCC BAA-587 / NCTC 13253) protein is UPF0276 protein BPP1075.